The chain runs to 210 residues: uncharacterized protein (210 aa).

Helical transmembrane passes span 9–29, 35–55, 64–84, 91–111, 149–169, and 190–210; these read WVVTGLFVLTAAECGLAIIAK, LIVNHGLHFAMAVAMAVMAWP, GPAVFFLLAAVWFGATAVVAV, GLYGYHGLMMLATAWMYAAMN, IWFSAVNWIGTVGFAVAAVFW, and IGQAMMAAGMAMLFFAMLFPV.

The protein localises to the cell membrane. This is an uncharacterized protein from Mycobacterium bovis (strain ATCC BAA-935 / AF2122/97).